The following is a 352-amino-acid chain: Rhodopsin (352 aa).

Topologically, residues 1–36 (MNGTEGPFFYIPMVNTTGIVRSPYEYPQYYLVNPAA) are extracellular. N-linked (GlcNAc...) asparagine glycans are attached at residues asparagine 2 and asparagine 15. The chain crosses the membrane as a helical span at residues 37-61 (YAALGAYMFFLILTGFPINFLTLYV). The Cytoplasmic segment spans residues 62–73 (TLEHKKLRTALN). A helical transmembrane segment spans residues 74–96 (LILLNLAVADLFMVFGGFTTTMY). The Extracellular portion of the chain corresponds to 97–110 (TSMHGYFVLGRLGC). Cysteine 110 and cysteine 187 form a disulfide bridge. A helical transmembrane segment spans residues 111–133 (NVEGFFATLGGEIALWSLVVLAV). Residues 134 to 136 (ERW) carry the 'Ionic lock' involved in activated form stabilization motif. Residues 134 to 152 (ERWVVVCKPISNFRFTENH) are Cytoplasmic-facing. A helical transmembrane segment spans residues 153-173 (AIMGVAFSWIMAATCAVPPLV). The Extracellular portion of the chain corresponds to 174-202 (GWSRYIPEGMQCSCGVDYYTRAEGFNNES). A helical membrane pass occupies residues 203-224 (FVIYMFIVHFLAPLIVIFFCYG). Topologically, residues 225–252 (RLLCAVKEAAAAQQESETTQRAEREVTR) are cytoplasmic. A helical membrane pass occupies residues 253–274 (MVIIMVIGFLTSWLPYASVAWY). Topologically, residues 275 to 286 (IFTHQGTEFGPL) are extracellular. Residues 287–308 (FMTIPAFFAKSSALYNPMIYIC) traverse the membrane as a helical segment. Residue lysine 296 is modified to N6-(retinylidene)lysine. The Cytoplasmic portion of the chain corresponds to 309–352 (MNKQFRHCMITTLCCGKNPFEEEEGASTTKTEASSVSSSSVSPA). S-palmitoyl cysteine attachment occurs at residues cysteine 322 and cysteine 323. The tract at residues 331–352 (EEGASTTKTEASSVSSSSVSPA) is disordered. Positions 342 to 352 (SSVSSSSVSPA) are enriched in low complexity.

This sequence belongs to the G-protein coupled receptor 1 family. Opsin subfamily. Post-translationally, phosphorylated on some or all of the serine and threonine residues present in the C-terminal region. Contains one covalently linked retinal chromophore.

Its subcellular location is the membrane. It is found in the cell projection. It localises to the cilium. The protein resides in the photoreceptor outer segment. In terms of biological role, photoreceptor required for image-forming vision at low light intensity. While most salt water fish species use retinal as chromophore, most freshwater fish use 3-dehydroretinal, or a mixture of retinal and 3-dehydroretinal. Light-induced isomerization of 11-cis to all-trans retinal triggers a conformational change that activates signaling via G-proteins. Subsequent receptor phosphorylation mediates displacement of the bound G-protein alpha subunit by arrestin and terminates signaling. The protein is Rhodopsin (rho) of Pomatoschistus minutus (Sand goby).